The chain runs to 109 residues: Envelope small membrane protein (109 aa).

The Virion surface segment spans residues 1 to 11; sequence MTNLLNKSLEE. Residues 12–32 traverse the membrane as a helical segment; that stretch reads NGSFLTAVYIFVGFVALYLLG. The Intravirion segment spans residues 33 to 109; it reads RALQAFVQAA…QDVQRNKLYS (77 aa). Residues 89–109 are disordered; that stretch reads NGWNNKNPANFQDVQRNKLYS. The segment covering 90 to 109 has biased composition (polar residues); it reads GWNNKNPANFQDVQRNKLYS.

The protein belongs to the gammacoronaviruses E protein family. Homooligomer. Interacts with the M membrane protein in the budding compartment of the host cell, which is located between endoplasmic reticulum and the Golgi complex. The cytoplasmic tails of both proteins are important for this function. Interacts with Nucleoprotein.

The protein localises to the host Golgi apparatus membrane. Plays a central role in virus morphogenesis and assembly. Acts as a viroporin and self-assembles in host membranes forming pentameric protein-lipid pores that allow ion transport. Also plays a role in the induction of apoptosis. The chain is Envelope small membrane protein from Avian infectious bronchitis virus (strain KB8523) (IBV).